Consider the following 271-residue polypeptide: GPN-loop GTPase 3 (271 aa).

13-18 (GAGKST) contacts GTP. The short motif at 70–72 (GPN) is the Gly-Pro-Asn (GPN)-loop; involved in dimer interface element. Residue 173-176 (SKVD) coordinates GTP.

This sequence belongs to the GPN-loop GTPase family. As to quaternary structure, heterodimers with GPN1 or GPN2. Binds to RNA polymerase II (RNAPII).

Functionally, small GTPase required for proper nuclear import of RNA polymerase II and III (RNAPII and RNAPIII). May act at an RNAP assembly step prior to nuclear import. This Eremothecium gossypii (strain ATCC 10895 / CBS 109.51 / FGSC 9923 / NRRL Y-1056) (Yeast) protein is GPN-loop GTPase 3.